A 123-amino-acid chain; its full sequence is MRIQSLLLLGALLAVGSQLPAVFGRKKGEKWGGCPADDGPCLLSVPDQCVEDSQCPLTRKCCYRACFRQCVPRVSVKPGSCPQDQLRCLSPVNHQCHKDSDCSGKKRCCHSACGRDCRDPARG.

Positions 1–24 are cleaved as a signal peptide; it reads MRIQSLLLLGALLAVGSQLPAVFG. WAP domains are found at residues 27-73 and 74-121; these read KGEK…CVPR and VSVK…RDPA. Intrachain disulfides connect cysteine 34–cysteine 62, cysteine 41–cysteine 66, cysteine 49–cysteine 61, cysteine 55–cysteine 70, cysteine 81–cysteine 109, cysteine 88–cysteine 113, cysteine 96–cysteine 108, and cysteine 102–cysteine 117.

It localises to the secreted. Putative acid-stable proteinase inhibitor. This chain is WAP four-disulfide core domain protein 5 (WFDC5), found in Chlorocebus aethiops (Green monkey).